We begin with the raw amino-acid sequence, 49 residues long: Large ribosomal subunit protein bL33B (49 aa).

It belongs to the bacterial ribosomal protein bL33 family.

The chain is Large ribosomal subunit protein bL33B from Shouchella clausii (strain KSM-K16) (Alkalihalobacillus clausii).